Reading from the N-terminus, the 204-residue chain is Putative 3-methyladenine DNA glycosylase (204 aa).

Belongs to the DNA glycosylase MPG family.

This Bacillus cytotoxicus (strain DSM 22905 / CIP 110041 / 391-98 / NVH 391-98) protein is Putative 3-methyladenine DNA glycosylase.